Here is a 305-residue protein sequence, read N- to C-terminus: Acetylglutamate kinase (305 aa).

Residues 67 to 68 (GG), R89, and N190 each bind substrate.

The protein belongs to the acetylglutamate kinase family. ArgB subfamily.

It is found in the cytoplasm. It carries out the reaction N-acetyl-L-glutamate + ATP = N-acetyl-L-glutamyl 5-phosphate + ADP. Its pathway is amino-acid biosynthesis; L-arginine biosynthesis; N(2)-acetyl-L-ornithine from L-glutamate: step 2/4. Functionally, catalyzes the ATP-dependent phosphorylation of N-acetyl-L-glutamate. The sequence is that of Acetylglutamate kinase from Bifidobacterium animalis subsp. lactis (strain AD011).